The chain runs to 91 residues: Small ribosomal subunit protein bS16 (91 aa).

This sequence belongs to the bacterial ribosomal protein bS16 family.

The sequence is that of Small ribosomal subunit protein bS16 from Ruthia magnifica subsp. Calyptogena magnifica.